The following is a 129-amino-acid chain: UPF0325 protein SG1947 (129 aa).

Belongs to the UPF0325 family.

The protein is UPF0325 protein SG1947 of Sodalis glossinidius (strain morsitans).